The sequence spans 459 residues: tRNA modification GTPase MnmE (459 aa).

(6S)-5-formyl-5,6,7,8-tetrahydrofolate contacts are provided by arginine 21, glutamate 84, and arginine 123. The region spanning glycine 219–leucine 378 is the TrmE-type G domain. GTP is bound by residues asparagine 229–serine 234, threonine 248–threonine 254, and aspartate 273–glycine 276. Residues serine 233 and threonine 254 each contribute to the Mg(2+) site. Residue lysine 459 coordinates (6S)-5-formyl-5,6,7,8-tetrahydrofolate.

The protein belongs to the TRAFAC class TrmE-Era-EngA-EngB-Septin-like GTPase superfamily. TrmE GTPase family. As to quaternary structure, homodimer. Heterotetramer of two MnmE and two MnmG subunits. K(+) serves as cofactor.

The protein resides in the cytoplasm. Functionally, exhibits a very high intrinsic GTPase hydrolysis rate. Involved in the addition of a carboxymethylaminomethyl (cmnm) group at the wobble position (U34) of certain tRNAs, forming tRNA-cmnm(5)s(2)U34. This chain is tRNA modification GTPase MnmE, found in Lawsonia intracellularis (strain PHE/MN1-00).